The following is a 159-amino-acid chain: MSKKKPQQSSNTIARNKKARHEYFLEDKFEAGVSLQGWEIKSIRAGKVNISDSYVIIKNGEAYLLGAEIQPLNQASSHVYCEPDRSRKLLLKRRELDKLIGASEREGYSIVATTIYWKGPWAKLEIFLAQGKKSHDKRDTIKERDWQRQKARIMKHSVR.

It belongs to the SmpB family.

The protein localises to the cytoplasm. Functionally, required for rescue of stalled ribosomes mediated by trans-translation. Binds to transfer-messenger RNA (tmRNA), required for stable association of tmRNA with ribosomes. tmRNA and SmpB together mimic tRNA shape, replacing the anticodon stem-loop with SmpB. tmRNA is encoded by the ssrA gene; the 2 termini fold to resemble tRNA(Ala) and it encodes a 'tag peptide', a short internal open reading frame. During trans-translation Ala-aminoacylated tmRNA acts like a tRNA, entering the A-site of stalled ribosomes, displacing the stalled mRNA. The ribosome then switches to translate the ORF on the tmRNA; the nascent peptide is terminated with the 'tag peptide' encoded by the tmRNA and targeted for degradation. The ribosome is freed to recommence translation, which seems to be the essential function of trans-translation. This Idiomarina loihiensis (strain ATCC BAA-735 / DSM 15497 / L2-TR) protein is SsrA-binding protein.